The chain runs to 485 residues: Probable L-xylulose kinase (485 aa).

It belongs to the FGGY kinase family. In terms of assembly, homodimer.

The enzyme catalyses L-xylulose + ATP = L-xylulose 5-phosphate + ADP + H(+). This is Probable L-xylulose kinase (lyx) from Haemophilus influenzae (strain ATCC 51907 / DSM 11121 / KW20 / Rd).